The following is a 207-amino-acid chain: Fibroblast growth factor 18 (207 aa).

Residues 1–27 form the signal peptide; sequence MYSAPSACTCLCLHFLLLCFQVQVLAA. Asparagine 39 carries an N-linked (GlcNAc...) asparagine glycan. Cysteines 109 and 127 form a disulfide. An N-linked (GlcNAc...) asparagine glycan is attached at asparagine 137. The tract at residues 157–183 is disordered; it reads GRPRKGPKTRENQQDVHFMKRYPKGQT. Over residues 164–174 the composition is skewed to basic and acidic residues; it reads KTRENQQDVHF.

It belongs to the heparin-binding growth factors family. As to quaternary structure, interacts with FGFR3 and FGFR4. As to expression, mainly expressed in the lung. Not detected in brain, heart, liver, kidney and small intestine.

Its subcellular location is the secreted. Plays an important role in the regulation of cell proliferation, cell differentiation and cell migration. Required for normal ossification and bone development. Stimulates hepatic and intestinal proliferation. This is Fibroblast growth factor 18 (Fgf18) from Rattus norvegicus (Rat).